We begin with the raw amino-acid sequence, 482 residues long: Protein DETOXIFICATION 13 (482 aa).

Helical transmembrane passes span 39-59, 77-97, 124-144, 159-179, 188-208, 218-238, 268-288, 297-317, 337-357, 381-401, 416-436, and 439-459; these read LICF…LQII, LASS…SCAL, LALV…LLVF, AACL…TRYF, LLIT…LLVY, ALAL…LMCF, AAMI…SGLL, VLSV…AIAA, IVVY…STSL, MAPL…LSGI, LGAF…WIHL, and VGLW…LTLV.

This sequence belongs to the multi antimicrobial extrusion (MATE) (TC 2.A.66.1) family.

It localises to the membrane. The protein is Protein DETOXIFICATION 13 of Arabidopsis thaliana (Mouse-ear cress).